A 340-amino-acid polypeptide reads, in one-letter code: DNA-directed RNA polymerase subunit alpha (340 aa).

Positions 1–233 are alpha N-terminal domain (alpha-NTD); the sequence is MVREEVAVST…DLFIPFLHAE (233 aa). Positions 266–340 are alpha C-terminal domain (alpha-CTD); it reads KKEIALKCIF…GIDLPKNKRF (75 aa).

Belongs to the RNA polymerase alpha chain family. As to quaternary structure, in plastids the minimal PEP RNA polymerase catalytic core is composed of four subunits: alpha, beta, beta', and beta''. When a (nuclear-encoded) sigma factor is associated with the core the holoenzyme is formed, which can initiate transcription.

The protein resides in the plastid. It is found in the chloroplast. It carries out the reaction RNA(n) + a ribonucleoside 5'-triphosphate = RNA(n+1) + diphosphate. In terms of biological role, DNA-dependent RNA polymerase catalyzes the transcription of DNA into RNA using the four ribonucleoside triphosphates as substrates. The protein is DNA-directed RNA polymerase subunit alpha of Calycanthus floridus var. glaucus (Eastern sweetshrub).